The primary structure comprises 126 residues: Holo-[acyl-carrier-protein] synthase (126 aa).

Residues Asp-9 and Glu-58 each coordinate Mg(2+).

Belongs to the P-Pant transferase superfamily. AcpS family. It depends on Mg(2+) as a cofactor.

The protein resides in the cytoplasm. The catalysed reaction is apo-[ACP] + CoA = holo-[ACP] + adenosine 3',5'-bisphosphate + H(+). Transfers the 4'-phosphopantetheine moiety from coenzyme A to a Ser of acyl-carrier-protein. The chain is Holo-[acyl-carrier-protein] synthase from Edwardsiella ictaluri (strain 93-146).